The chain runs to 560 residues: MASSTALISDTEAWKDLKGHVEDIKKTHLRDLMTDANRCQSMMMEFDGLLLDYSRQRAPVETMDKLLNLAKAAQLTEKISRMFNGEHINSTENRSVLHVALRAPKDAVIKADGKNVVQEVWNVLDKIKEFSEKIRSGSWVGATGKPLKDVIAIGIGGSFLGPLFVHTALQTDPEALESAKGRQLRFLANIDPVDVARNIIGLNPETTLVVVVSKTFTTAETMLNARTLREWITAALGASAVAKHMVAVSTNLALVEKFGIDPNNAFAFWDWVGGRYSVCSAVGVLPLSLQYGFSVVEKFLKGASSIDQHFQSTPFEKNIPVLLGLLSVWNVSFLGYPARAILPYSQALEKFAPHIQQVSMESNGKGVSIDGLPLPFETGEIDFGEPGTNGQHSFYQLIHQGRVIPCDFIGIVKSQQPVYLKGEVVSNHDELMSNFFAQPDALAYGKTPEQLQKENVSENLIPHKTFSGNRPSLSLLLPELTAYNVGQLLAIYEHRVAVQGFVWGINSFDQWGVELGKVLATQVRKQLHSSRTQGTALEGFNYSTTTLLKRYLETSSEPQM.

Position 2 is an N-acetylalanine (Ala-2). Glu-361 functions as the Proton donor in the catalytic mechanism. Residues His-392 and Lys-517 contribute to the active site.

This sequence belongs to the GPI family. Homodimer.

Its subcellular location is the cytoplasm. The catalysed reaction is alpha-D-glucose 6-phosphate = beta-D-fructose 6-phosphate. It functions in the pathway carbohydrate degradation; glycolysis; D-glyceraldehyde 3-phosphate and glycerone phosphate from D-glucose: step 2/4. The sequence is that of Glucose-6-phosphate isomerase, cytosolic (PGIC) from Arabidopsis lyrata subsp. petraea (Northern rock-cress).